A 305-amino-acid chain; its full sequence is Olfactory receptor 9G19 (305 aa).

The Extracellular segment spans residues 1–24 (MDQNNNTVSEFIMLGFTTDPVIQK). The chain crosses the membrane as a helical span at residues 25–45 (VLFAVFLVVYTLTLMGNSSLI). Over 46 to 55 (MLICNDSRLH) the chain is Cytoplasmic. The chain crosses the membrane as a helical span at residues 56–76 (TPMYFFIGNLSFLDLGLSSVY). Over 77-96 (TPKILETCISEDKSISFAGC) the chain is Extracellular. Cysteines 96 and 178 form a disulfide. The helical transmembrane segment at 97–117 (VAQFFFSAALDYTECYLLAAM) threads the bilayer. The Cytoplasmic segment spans residues 118–138 (AYDRYVAISKPLLYSQAMSLK). A helical membrane pass occupies residues 139-159 (LCVCFVVASYVGGFINSVIIT). The Extracellular segment spans residues 160–204 (KDTFALTFCNDNVIDDFFCDIPPLVKLACGKKKSFQSVLFFLLTS). The chain crosses the membrane as a helical span at residues 205 to 225 (NVIIPIVFILATYLFIIATIL). Topologically, residues 226-236 (RIRSTQGRLKA) are cytoplasmic. Residues 237–257 (FSTCSSHLISVTLYYGSILYI) traverse the membrane as a helical segment. Residues 258 to 270 (YARPRSSYSLDRD) lie on the Extracellular side of the membrane. The chain crosses the membrane as a helical span at residues 271–291 (KIVSTFYTVVFPMLNPLIYSL). Residues 292 to 305 (RNKDVKEALNKLLK) are Cytoplasmic-facing.

This sequence belongs to the G-protein coupled receptor 1 family.

Its subcellular location is the cell membrane. Its function is as follows. Odorant receptor. In Mus musculus (Mouse), this protein is Olfactory receptor 9G19.